The following is a 368-amino-acid chain: MNNKIALYCRSGFEKECAAEITEKAAQLEIFGFARVKENSGYVLFECYQLEDADRLIREIPFREFIFARQMMVVGELLKDLPPEDRVSPIVGMLVGVIEKAGELRVEVADTNESKELLKFCRKLTVPLRSALREQKILSARENAHRPVVHVFFIAPGCCYVGYSYSNNNSPFYMGIPRLKFPSDAPSRSTLKLEEAFHVFIPADEWEERLASGMHAVDLGACPGGWTYQLVQRSMMIQAVDNGLMAQSLMDTGQVTHNRADGFKYEPTRSNIYWLVCDMVEKPTKVTQLITKWLVNGWCREAIFNLKLPMKKRYEEVVQNLAMMDEQLKENGINADIHAKQLYHDREEVTVHVRRIWSGAPGRRDERY.

Residues S189, 222–225, D241, D261, and D278 each bind S-adenosyl-L-methionine; that span reads CPGG. K307 acts as the Proton acceptor in catalysis.

Belongs to the class I-like SAM-binding methyltransferase superfamily. RNA methyltransferase RlmE family. RlmM subfamily. As to quaternary structure, monomer.

The protein resides in the cytoplasm. It catalyses the reaction cytidine(2498) in 23S rRNA + S-adenosyl-L-methionine = 2'-O-methylcytidine(2498) in 23S rRNA + S-adenosyl-L-homocysteine + H(+). In terms of biological role, catalyzes the 2'-O-methylation at nucleotide C2498 in 23S rRNA. The protein is Ribosomal RNA large subunit methyltransferase M of Yersinia pestis bv. Antiqua (strain Angola).